A 390-amino-acid chain; its full sequence is ATP-sensitive inward rectifier potassium channel 11 (390 aa).

Residues 1–65 (MLSRKGIIPE…LQDVFTTLVD (65 aa)) are Cytoplasmic-facing. Asn48 and Arg50 together coordinate ATP. The helical transmembrane segment at 66–92 (LKWPHTLLIFTMSFLCSWLLFAMAWWL) threads the bilayer. Over 93–116 (IAFAHGDLAPSEGTAEPCVTSIHS) the chain is Extracellular. Cysteines 110 and 142 form a disulfide. The discontinuously helical; Pore-forming intramembrane region spans 117 to 133 (FSSAFLFSIEVQVTIGF). Thr130 and Phe133 together coordinate K(+). The Selectivity filter motif lies at 130–135 (TIGFGG). Residues 134 to 142 (GGRMVTEEC) lie on the Extracellular side of the membrane. The chain crosses the membrane as a helical span at residues 143-171 (PLAILILIVQNIVGLMINAIMLGCIFMKT). Over 172 to 390 (AQAHRRAETL…KFSISPDSLS (219 aa)) the chain is Cytoplasmic. Arg176 is an a 1,2-diacyl-sn-glycero-3-phospho-(1D-myo-inositol-4,5-bisphosphate) binding site. ATP is bound at residue Tyr330. Phosphothreonine; by MAPK1 is present on Thr341. Residue Ser385 is modified to Phosphoserine; by MAPK1.

The protein belongs to the inward rectifier-type potassium channel (TC 1.A.2.1) family. KCNJ11 subfamily. As to quaternary structure, homotetramer; the homotetramer binds four ATP molecules (one ATP per subunit). Forms an heterooctamer with ABCC8/SUR1; one KCNJ11 homotetramer interacts with four ABCC8/SUR1 molecules. Interacts with ABCC9/SUR2. In terms of processing, phosphorylation by MAPK1 results in changes in channel gating that destabilize the closed states and reduce the ATP sensitivity.

Its subcellular location is the membrane. The enzyme catalyses K(+)(in) = K(+)(out). KATP channels are regulated by cytoplasmic ATP/ADP ratios; ATP inhibits the channel by closing the pore, while ADP activates the channel. Activated by phosphatidylinositol 4,5-biphosphate (PtdIns(4,5)P2). Inward rectifier potassium channel that forms the pore of ATP-sensitive potassium channels (KATP), regulating potassium permeability as a function of cytoplasmic ATP and ADP concentrations in many different cells. Inward rectifier potassium channels are characterized by a greater tendency to allow potassium to flow into the cell rather than out of it. Their voltage dependence is regulated by the concentration of extracellular potassium; as external potassium is raised, the voltage range of the channel opening shifts to more positive voltages. The inward rectification is mainly due to the blockage of outward current by internal magnesium. Can be blocked by extracellular barium. In pancreatic cells, it forms KATP channels with ABCC8/SUR1. Can form cardiac and smooth muscle-type KATP channels with ABCC9. The sequence is that of ATP-sensitive inward rectifier potassium channel 11 (KCNJ11) from Homo sapiens (Human).